A 229-amino-acid polypeptide reads, in one-letter code: Indole-3-glycerol phosphate synthase (229 aa).

Belongs to the TrpC family.

The enzyme catalyses 1-(2-carboxyphenylamino)-1-deoxy-D-ribulose 5-phosphate + H(+) = (1S,2R)-1-C-(indol-3-yl)glycerol 3-phosphate + CO2 + H2O. It functions in the pathway amino-acid biosynthesis; L-tryptophan biosynthesis; L-tryptophan from chorismate: step 4/5. This chain is Indole-3-glycerol phosphate synthase, found in Pyrococcus abyssi (strain GE5 / Orsay).